Reading from the N-terminus, the 609-residue chain is Granule-bound starch synthase 1, chloroplastic/amyloplastic (609 aa).

The transit peptide at 1–77 (MSALTTSQLA…SRRFPSVVVY (77 aa)) directs the protein to the chloroplast. Residues 29–67 (RHGFQGLKPRSPAGGDATSLSVTTSARATPKQQRSVQRG) form a disordered region. Polar residues predominate over residues 46–66 (TSLSVTTSARATPKQQRSVQR). Residue K97 participates in ADP-alpha-D-glucose binding. G100, R408, K413, K462, and Q493 together coordinate ADP. C337 and C529 are disulfide-bonded.

It belongs to the glycosyltransferase 1 family. Bacterial/plant glycogen synthase subfamily.

Its subcellular location is the plastid. The protein resides in the chloroplast. It is found in the amyloplast. It catalyses the reaction an NDP-alpha-D-glucose + [(1-&gt;4)-alpha-D-glucosyl](n) = [(1-&gt;4)-alpha-D-glucosyl](n+1) + a ribonucleoside 5'-diphosphate + H(+). The protein operates within glycan biosynthesis; starch biosynthesis. In terms of biological role, required for the synthesis of amylose in endosperm. This chain is Granule-bound starch synthase 1, chloroplastic/amyloplastic (WAXY), found in Oryza sativa subsp. indica (Rice).